A 1574-amino-acid chain; its full sequence is Myosin-2 (1574 aa).

Position 2 is an N-acetylserine (Ser-2). The Myosin N-terminal SH3-like domain maps to 4–57 (EVGTRCWYPHKELGWIGAEVIKNEFNDGKYHLELQLEDDEIVSVDTKDLNNDKD). Residues 70-781 (EATEDLTSLS…MLAYLEKLRS (712 aa)) enclose the Myosin motor domain. 164–171 (GESGAGKT) provides a ligand contact to ATP. The segment at 443–523 (FIGVLDIYGF…LGILSLLDEE (81 aa)) is actin-binding. 6 consecutive IQ domains span residues 784-806 (MHNS…QYLQ), 807-831 (ISQA…NDEM), 832-855 (KVNC…VFSV), 856-879 (LRTI…KQEH), 880-902 (EYNA…RFLR), and 903-932 (TKKD…DAKS). The stretch at 933–1088 (VNHLKEVSYK…RLQTAMSLGT (156 aa)) forms a coiled coil. Positions 1087–1574 (GTVTTSVLPQ…VAQQVVQDGH (488 aa)) are non alpha-helical, tail domain. Thr-1097 is subject to Phosphothreonine. Ser-1121 is subject to Phosphoserine. Residues 1226–1501 (AQVLTTIQKV…LRYVADIVKK (276 aa)) enclose the Dilute domain.

Belongs to the TRAFAC class myosin-kinesin ATPase superfamily. Myosin family. As to quaternary structure, homodimer. Interacts with calmodulin (CMD1) and the myosin light chain MLC1 through its IQ repeats. Binds to the membrane receptors SEC4 and VAC17 to transport secretory vesicles and the vacuole, respectively. Binds to KAR9, which transports BIM1-coated cytoplasmic microtubules that are attached to the spindle pole body into the emerging bud, thereby correctly orienting the mitotic spindle. Interacts with YPT11 and MMR1 to accelerate mitochondrial distribution to the bud. Interacts with SHE4 and localizes it to the bud tip. Interacts with RHO3 and SMY1, putative regulators of MYO2 function. Interacts with SRO7.

It localises to the bud neck. Its subcellular location is the bud tip. Functionally, myosin heavy chain that is required for the cell cycle-regulated transport of various organelles and proteins for their segregation. Functions by binding with its tail domain to receptor proteins on organelles and exerting force with its N-terminal motor domain against actin filaments, thereby transporting its cargo along polarized actin cables. Essential for the delivery of secretory vesicles to sites of active growth during bud emergence and cytokinesis. Required for segregation and inheritance of peroxisomes, late Golgi compartments, mitochondria and the vacuole to the daughter cell during cell division. Also required for correct alignment of the spindle during mitosis. This Saccharomyces cerevisiae (strain ATCC 204508 / S288c) (Baker's yeast) protein is Myosin-2 (MYO2).